The primary structure comprises 467 residues: 3-isopropylmalate dehydratase large subunit (467 aa).

Positions 349, 408, and 411 each coordinate [4Fe-4S] cluster.

The protein belongs to the aconitase/IPM isomerase family. LeuC type 1 subfamily. Heterodimer of LeuC and LeuD. It depends on [4Fe-4S] cluster as a cofactor.

The catalysed reaction is (2R,3S)-3-isopropylmalate = (2S)-2-isopropylmalate. It functions in the pathway amino-acid biosynthesis; L-leucine biosynthesis; L-leucine from 3-methyl-2-oxobutanoate: step 2/4. Its function is as follows. Catalyzes the isomerization between 2-isopropylmalate and 3-isopropylmalate, via the formation of 2-isopropylmaleate. This Dinoroseobacter shibae (strain DSM 16493 / NCIMB 14021 / DFL 12) protein is 3-isopropylmalate dehydratase large subunit.